The following is a 715-amino-acid chain: Protein DENND6 homolog (715 aa).

The stretch at 13–58 forms a coiled coil; the sequence is MIFKEEEIKKQQILLEKEEKEKQEQQQKKLNKDNIFKLEEEGKKLE. The uDENN domain maps to 96 to 273; sequence NSFCIINFDL…VKQHQLGGGS (178 aa). Disordered regions lie at residues 269–296 and 392–416; these read LGGGSGGGLSSSPSSSSGGGNIPTSNTT and SGTRPDDSNNNNNQDDSEYNNNNNN. Residues 299 to 476 enclose the cDENN domain; that stretch reads SPSIWSEMKL…KDLLTRHVLD (178 aa). Low complexity predominate over residues 399–416; the sequence is SNNNNNQDDSEYNNNNNN. One can recognise a dDENN domain in the interval 478 to 600; it reads KEKILSEYKP…KQWLDDKRAQ (123 aa).

Belongs to the DENND6 family.

In Dictyostelium discoideum (Social amoeba), this protein is Protein DENND6 homolog.